A 545-amino-acid polypeptide reads, in one-letter code: MTTNYIFVTGGVVSSLGKGIAAASLAAILEARGLNVTIMKLDPYINVDPGTMSPIQHGEVFVTEDGAETDLDLGHYERFIRTKMSRRNNFTTGRIYSDVLRKERRGDYLGATVQVIPHITNAIKERVLEGGEGHDVVLVEIGGTVGDIESLPFLEAIRQLAVDIGREHALFMHLTLVPYLAAAGEVKTKPTQHSVKELLSIGIQPDILICRSDRAVPANERAKIALFCNVPEKAVISMKDVDSIYKIPGLLKSQGLDDYICKRFSLNCPEANLSEWEQVIYEEANPAGEVTIGMVGKYIELPDAYKSVIEALKHGGLKNRVTVNIKLIDSQDVETRGVEILKDLDAILIPGGFGYRGVEGKIATARYARENNIPYLGICLGMQVALIEFARNVAGMDNANSTEFVPDCKYPVVALITEWRDEDGNVEVRSEKSDLGGTMRLGAQQCQLSDDSLVRQLYGAPTIVERHRHRYEVNNMLLKQIEAAGLRVAGRSGDDQLVEIIEVPNHPWFVACQFHPEFTSTPRDGHPLFAGFVKAANEHQKRQAK.

The amidoligase domain stretch occupies residues 1–266 (MTTNYIFVTG…DDYICKRFSL (266 aa)). S14 lines the CTP pocket. S14 provides a ligand contact to UTP. ATP is bound by residues 15 to 20 (SLGKGI) and D72. Residues D72 and E140 each coordinate Mg(2+). CTP is bound by residues 147-149 (DIE), 187-192 (KTKPTQ), and K223. UTP contacts are provided by residues 187–192 (KTKPTQ) and K223. An ATP-binding site is contributed by 239–241 (KDV). The Glutamine amidotransferase type-1 domain maps to 291 to 542 (TIGMVGKYIE…VKAANEHQKR (252 aa)). L-glutamine is bound at residue G352. C379 acts as the Nucleophile; for glutamine hydrolysis in catalysis. L-glutamine-binding positions include 380–383 (LGMQ), E403, and R470. Residues H515 and E517 contribute to the active site.

The protein belongs to the CTP synthase family. In terms of assembly, homotetramer.

It carries out the reaction UTP + L-glutamine + ATP + H2O = CTP + L-glutamate + ADP + phosphate + 2 H(+). The catalysed reaction is L-glutamine + H2O = L-glutamate + NH4(+). The enzyme catalyses UTP + NH4(+) + ATP = CTP + ADP + phosphate + 2 H(+). Its pathway is pyrimidine metabolism; CTP biosynthesis via de novo pathway; CTP from UDP: step 2/2. With respect to regulation, allosterically activated by GTP, when glutamine is the substrate; GTP has no effect on the reaction when ammonia is the substrate. The allosteric effector GTP functions by stabilizing the protein conformation that binds the tetrahedral intermediate(s) formed during glutamine hydrolysis. Inhibited by the product CTP, via allosteric rather than competitive inhibition. Functionally, catalyzes the ATP-dependent amination of UTP to CTP with either L-glutamine or ammonia as the source of nitrogen. Regulates intracellular CTP levels through interactions with the four ribonucleotide triphosphates. In Salmonella paratyphi A (strain ATCC 9150 / SARB42), this protein is CTP synthase.